Reading from the N-terminus, the 461-residue chain is Alpha-tubulin N-acetyltransferase 1 (461 aa).

The region spanning 2-189 (VEFRFDIKPL…NNFVLYEGFF (188 aa)) is the N-acetyltransferase domain. Acetyl-CoA contacts are provided by residues 123–136 (FYVHESRQRAGLGK) and 159–168 (SEKLLSFLSK). Disordered stretches follow at residues 196–295 (NGGG…GNHD), 314–362 (NSYE…PEVA), and 418–443 (RPPGHEVTSPGQDNTDAMSTVSSGGG). The span at 233–254 (RRGSQQQTTPNARLQQITQISP) shows a compositional bias: polar residues. Over residues 283 to 293 (GSAEANSGNGN) the composition is skewed to low complexity. Over residues 318–336 (PEPEVEPEPEPEPEPEPEP) the composition is skewed to acidic residues. The segment covering 339–356 (ITPPSPPPKSHTPTPPSV) has biased composition (pro residues). The segment covering 426–439 (SPGQDNTDAMSTVS) has biased composition (polar residues).

This sequence belongs to the acetyltransferase ATAT1 family.

It catalyses the reaction L-lysyl-[alpha-tubulin] + acetyl-CoA = N(6)-acetyl-L-lysyl-[alpha-tubulin] + CoA + H(+). Functionally, specifically acetylates 'Lys-40' in alpha-tubulin on the lumenal side of microtubules. Promotes microtubule destabilization and accelerates microtubule dynamics; this activity may be independent of acetylation activity. Acetylates alpha-tubulin with a slow enzymatic rate, due to a catalytic site that is not optimized for acetyl transfer. Enters the microtubule through each end and diffuses quickly throughout the lumen of microtubules. Acetylates only long/old microtubules because of its slow acetylation rate since it does not have time to act on dynamically unstable microtubules before the enzyme is released. Acetylates central spindle microtubules. In Drosophila melanogaster (Fruit fly), this protein is Alpha-tubulin N-acetyltransferase 1.